Here is a 365-residue protein sequence, read N- to C-terminus: G-protein coupled receptor 68 (365 aa).

The Extracellular segment spans residues Met-1 to Ser-12. N-linked (GlcNAc...) asparagine glycosylation is found at Asn-3 and Asn-8. Residues Cys-13 to Gln-49 traverse the membrane as a helical segment. 2 cysteine pairs are disulfide-bonded: Cys-13–Cys-258 and Cys-94–Cys-172. The Cytoplasmic segment spans residues Ile-50–Arg-53. The helical transmembrane segment at Asn-54 to His-84 threads the bilayer. Residues Asp-85 to His-89 are Extracellular-facing. The helical transmembrane segment at Gly-90–His-125 threads the bilayer. The Cytoplasmic portion of the chain corresponds to Pro-126–Arg-133. A helical membrane pass occupies residues Thr-134–Glu-160. Topologically, residues Glu-161–Tyr-176 are extracellular. The interval Glu-161 to Tyr-176 is extracellular loop 2 (ECL2). The helical transmembrane segment at Pro-177 to Arg-214 threads the bilayer. At Ser-215–Thr-218 the chain is on the cytoplasmic side. The chain crosses the membrane as a helical span at residues Gln-219–Trp-254. Over Glu-255–Phe-260 the chain is Extracellular. Residues Ala-261–Val-289 form a helical membrane-spanning segment. The Cytoplasmic segment spans residues Ser-290–Ala-365. Residues His-345–Ala-365 form a disordered region. Residues Gly-355–Ala-365 are compositionally biased toward gly residues.

The protein belongs to the G-protein coupled receptor 1 family. As to expression, found at low level in a wide range of tissues, but significantly expressed in lung, kidney, bone and nervous system.

It is found in the cell membrane. Its activity is regulated as follows. Activated by a network of residues that connects an extracellular-facing cavity to Glu-149, a conserved charged residue buried in the transmembrane core of the receptor. Protonation likely drives conformational changes in extracellular loop 2 (ECL2), which stabilizes movement of transmembrane 3 (TM3) and a series of rearrangements that connect the extracellular-facing cavity to Glu-149, a residue only conserved in proton-sensing G-protein coupled receptors. Activated in an allosteric manner by divalent metal ions at the extracellular surface following the order: Cd(2+) &gt; Co(2+) &gt; Ni(2+) &gt; Zn(2+) &gt; Fe(2+) &gt; Ca(2+) &gt; Mg(2+). Activated by the benzodiazepine drug lorazepam, a non-selective GPR68 positive allosteric modulator. Activated by ogerin (ZINC67740571), a selective GPR68 positive allosteric modulator. Activated by small molecule MS48107, a selective positive allosteric modulator. Inhibited by small molecule ogremorphin, inducing ferroptosis in cancer cells. Proton-sensing G-protein coupled receptor activated by extracellular pH, which is required to monitor pH changes and generate adaptive reactions. The receptor is almost silent at pH 7.8 but fully activated at pH 6.8. Ligand binding causes a conformation change that triggers signaling via guanine nucleotide-binding proteins (G proteins) and modulates the activity of downstream effectors, such as phospholipase C. GPR68 is mainly coupled to G(q) G proteins and mediates production of diacylglycerol (DAG) and inositol 1,4,5-trisphosphate (IP3). Acts as a key mechanosensor of fluid shear stress and membrane stretch. Expressed in endothelial cells of small-diameter resistance arteries, where it mediates flow-induced dilation in response to shear stress. May represents an osteoblastic pH sensor regulating cell-mediated responses to acidosis in bone. Acts as a regulator of calcium-sensing receptor CASR in a seesaw manner: GPR68-mediated signaling inhibits CASR signaling in response to protons, while CASR inhibits GPR68 in presence of extracellular calcium. This is G-protein coupled receptor 68 from Homo sapiens (Human).